Here is a 329-residue protein sequence, read N- to C-terminus: Sex comb on midleg-like protein 1 (329 aa).

Residues 136–160 (SYSPTLPVSRRENNSPSNLPRPSFC) form a disordered region. Residues Ser138 and Ser238 each carry the phosphoserine modification. The SAM domain maps to 258 to 325 (WSVEAVVLFL…YYIDRLKQGK (68 aa)).

This sequence belongs to the SCM family.

The protein localises to the nucleus. Its function is as follows. Putative Polycomb group (PcG) protein. PcG proteins act by forming multiprotein complexes, which are required to maintain the transcriptionally repressive state of homeotic genes throughout development. May be involved in spermatogenesis during sexual maturation. The sequence is that of Sex comb on midleg-like protein 1 (SCML1) from Pongo pygmaeus (Bornean orangutan).